A 166-amino-acid chain; its full sequence is Interferon gamma (166 aa).

A signal peptide spans 1 to 23 (MNYTTICLAFQLCVIFCSSGYYC). Glutamine 24 bears the Pyrrolidone carboxylic acid mark. Residues asparagine 39, asparagine 106, and asparagine 107 are each glycosylated (N-linked (GlcNAc...) asparagine).

The protein belongs to the type II (or gamma) interferon family. In terms of assembly, homodimer. Interacts with IFNGR1 (via extracellular domain); this interaction promotes IFNGR1 dimerization.

It localises to the secreted. Type II interferon produced by immune cells such as T-cells and NK cells that plays crucial roles in antimicrobial, antiviral, and antitumor responses by activating effector immune cells and enhancing antigen presentation. Primarily signals through the JAK-STAT pathway after interaction with its receptor IFNGR1 to affect gene regulation. Upon IFNG binding, IFNGR1 intracellular domain opens out to allow association of downstream signaling components JAK2, JAK1 and STAT1, leading to STAT1 activation, nuclear translocation and transcription of IFNG-regulated genes. Many of the induced genes are transcription factors such as IRF1 that are able to further drive regulation of a next wave of transcription. Plays a role in class I antigen presentation pathway by inducing a replacement of catalytic proteasome subunits with immunoproteasome subunits. In turn, increases the quantity, quality, and repertoire of peptides for class I MHC loading. Increases the efficiency of peptide generation also by inducing the expression of activator PA28 that associates with the proteasome and alters its proteolytic cleavage preference. Up-regulates as well MHC II complexes on the cell surface by promoting expression of several key molecules such as cathepsins B/CTSB, H/CTSH, and L/CTSL. Participates in the regulation of hematopoietic stem cells during development and under homeostatic conditions by affecting their development, quiescence, and differentiation. This is Interferon gamma (IFNG) from Mustela putorius furo (European domestic ferret).